A 192-amino-acid polypeptide reads, in one-letter code: Potassium-transporting ATPase KdpC subunit (192 aa).

The chain crosses the membrane as a helical span at residues 14–34 (LTGVLVVLCGLIYPAMVTGIA).

The protein belongs to the KdpC family. The system is composed of three essential subunits: KdpA, KdpB and KdpC.

Its subcellular location is the cell membrane. Functionally, part of the high-affinity ATP-driven potassium transport (or Kdp) system, which catalyzes the hydrolysis of ATP coupled with the electrogenic transport of potassium into the cytoplasm. This subunit acts as a catalytic chaperone that increases the ATP-binding affinity of the ATP-hydrolyzing subunit KdpB by the formation of a transient KdpB/KdpC/ATP ternary complex. The protein is Potassium-transporting ATPase KdpC subunit of Bacillus cytotoxicus (strain DSM 22905 / CIP 110041 / 391-98 / NVH 391-98).